The chain runs to 229 residues: Transcriptional regulatory protein YxdJ (229 aa).

The Response regulatory domain occupies lysine 3–isoleucine 116. A 4-aspartylphosphate modification is found at aspartate 52. The ompR/PhoB-type DNA-binding region spans glutamate 129–alanine 227.

Post-translationally, phosphorylated by YxdK.

It localises to the cytoplasm. Its function is as follows. Probable member of the two-component regulatory system YxdK/YxdJ. Positively regulates the expression of the yxdLMyxeA operon by direct interaction with its promoter region. Could also indirectly regulate the expression of the dlt operon. This Bacillus subtilis (strain 168) protein is Transcriptional regulatory protein YxdJ (yxdJ).